Consider the following 361-residue polypeptide: S-adenosylmethionine:tRNA ribosyltransferase-isomerase (361 aa).

This sequence belongs to the QueA family. As to quaternary structure, monomer.

Its subcellular location is the cytoplasm. It catalyses the reaction 7-aminomethyl-7-carbaguanosine(34) in tRNA + S-adenosyl-L-methionine = epoxyqueuosine(34) in tRNA + adenine + L-methionine + 2 H(+). It participates in tRNA modification; tRNA-queuosine biosynthesis. Transfers and isomerizes the ribose moiety from AdoMet to the 7-aminomethyl group of 7-deazaguanine (preQ1-tRNA) to give epoxyqueuosine (oQ-tRNA). The sequence is that of S-adenosylmethionine:tRNA ribosyltransferase-isomerase from Methylocella silvestris (strain DSM 15510 / CIP 108128 / LMG 27833 / NCIMB 13906 / BL2).